The primary structure comprises 1194 residues: ATP-dependent RNA helicase DHX30 (1194 aa).

Basic and acidic residues predominate over residues 1–10 (MFSLDSFRKD). A disordered region spans residues 1 to 27 (MFSLDSFRKDRAQHRQRQCKLPPPRLP). 2 positions are modified to phosphoserine: serine 6 and arginine 15. A DRBM domain is found at 53 to 121 (PKNLLNSVIG…QAAAAACQLF (69 aa)). The interval 150 to 199 (ADSWWRPEPTMPPTSWRQLNPESIRPGGPGGLSRSLGREEEEDEEEELEE) is disordered. Acidic residues predominate over residues 188 to 199 (EEEEDEEEELEE). Phosphoserine is present on residues serine 226 and serine 380. The Helicase ATP-binding domain occupies 444-612 (LNAIEQHPVV…FGGCPVIKVP (169 aa)). 457–464 (GDTGCGKT) is an ATP binding site. A DEAH box motif is present at residues 559 to 562 (DEVH). Residues 654 to 827 (LVTDLVLHID…NLVLQAKIHM (174 aa)) enclose the Helicase C-terminal domain.

Belongs to the DEAD box helicase family. DEAH subfamily. As to quaternary structure, identified in a complex with TFAM and SSBP1. Interacts with AGO1 and AGO2. Interacts (via N-terminus) with ZC3HAV1 (via N-terminal domain) in an RNA-independent manner. Found in a complex with GRSF1, DDX28, FASTKD2 and FASTKD5. Post-translationally, phosphorylated on Ser-15.

It is found in the cytoplasm. Its subcellular location is the mitochondrion. The protein resides in the mitochondrion matrix. It localises to the mitochondrion nucleoid. The catalysed reaction is ATP + H2O = ADP + phosphate + H(+). Its function is as follows. RNA-dependent helicase. Plays an important role in the assembly of the mitochondrial large ribosomal subunit. Required for optimal function of the zinc-finger antiviral protein ZC3HAV1. Associates with mitochondrial DNA. Involved in nervous system development and differentiation through its involvement in the up-regulation of a number of genes which are required for neurogenesis, including GSC, NCAM1, neurogenin, and NEUROD. This is ATP-dependent RNA helicase DHX30 (DHX30) from Homo sapiens (Human).